A 106-amino-acid chain; its full sequence is Replication protein A 14 kDa subunit (106 aa).

The protein belongs to the replication factor A protein 3 family. As to quaternary structure, component of the heterotrimeric canonical replication protein A complex (RPA). Interacts with RPA1B, RPA2A, RPA2B and RPA2C.

The protein localises to the nucleus. As part of the replication protein A (RPA/RP-A), a single-stranded DNA-binding heterotrimeric complex, may play an essential role in DNA replication, recombination and repair. Binds and stabilizes single-stranded DNA intermediates, preventing complementary DNA reannealing and recruiting different proteins involved in DNA metabolism. The sequence is that of Replication protein A 14 kDa subunit (RPA3) from Oryza sativa subsp. japonica (Rice).